Consider the following 265-residue polypeptide: Phosphonates import ATP-binding protein PhnC 1 (265 aa).

The ABC transporter domain maps to Leu3–Gln247. Gly36 to Thr43 provides a ligand contact to ATP. Positions Asn245–Cys265 are disordered.

It belongs to the ABC transporter superfamily. Phosphonates importer (TC 3.A.1.9.1) family. In terms of assembly, the complex is composed of two ATP-binding proteins (PhnC), two transmembrane proteins (PhnE) and a solute-binding protein (PhnD).

It is found in the cell inner membrane. It catalyses the reaction phosphonate(out) + ATP + H2O = phosphonate(in) + ADP + phosphate + H(+). In terms of biological role, part of the ABC transporter complex PhnCDE involved in phosphonates import. Responsible for energy coupling to the transport system. This chain is Phosphonates import ATP-binding protein PhnC 1, found in Pseudomonas savastanoi pv. phaseolicola (strain 1448A / Race 6) (Pseudomonas syringae pv. phaseolicola (strain 1448A / Race 6)).